A 1072-amino-acid polypeptide reads, in one-letter code: Carbamoyl phosphate synthase large chain (1072 aa).

Residues 1 to 401 (MPKYKDINKV…SLLKAVRSLE (401 aa)) form a carboxyphosphate synthetic domain region. ATP is bound by residues Arg129, Arg169, Gly175, Gly176, Lys208, Leu210, Glu215, Gly241, Val242, His243, Gln284, and Glu298. The ATP-grasp 1 domain occupies 133 to 327 (KRKMQEIGEP…IAKVAAKIAI (195 aa)). Gln284, Glu298, and Asn300 together coordinate Mg(2+). Mn(2+)-binding residues include Gln284, Glu298, and Asn300. An oligomerization domain region spans residues 402-544 (IKAYGLRLNN…YIYSTYGEED (143 aa)). A carbamoyl phosphate synthetic domain region spans residues 545–929 (EVEIHEIPKV…ALYKALEGAG (385 aa)). Residues 671 to 861 (SKLLKELNIN…MVKLAVEVAL (191 aa)) form the ATP-grasp 2 domain. Positions 707, 746, 748, 752, 777, 778, 779, 780, 820, and 832 each coordinate ATP. Mg(2+) is bound by residues Gln820, Glu832, and Asn834. Mn(2+) contacts are provided by Gln820, Glu832, and Asn834. The MGS-like domain occupies 930-1072 (LKIPKKGKIL…QKDNVKNLVL (143 aa)). The interval 930–1072 (LKIPKKGKIL…QKDNVKNLVL (143 aa)) is allosteric domain.

It belongs to the CarB family. In terms of assembly, composed of two chains; the small (or glutamine) chain promotes the hydrolysis of glutamine to ammonia, which is used by the large (or ammonia) chain to synthesize carbamoyl phosphate. Tetramer of heterodimers (alpha,beta)4. Mg(2+) serves as cofactor. The cofactor is Mn(2+).

It carries out the reaction hydrogencarbonate + L-glutamine + 2 ATP + H2O = carbamoyl phosphate + L-glutamate + 2 ADP + phosphate + 2 H(+). It catalyses the reaction hydrogencarbonate + NH4(+) + 2 ATP = carbamoyl phosphate + 2 ADP + phosphate + 2 H(+). Its pathway is amino-acid biosynthesis; L-arginine biosynthesis; carbamoyl phosphate from bicarbonate: step 1/1. The protein operates within pyrimidine metabolism; UMP biosynthesis via de novo pathway; (S)-dihydroorotate from bicarbonate: step 1/3. Large subunit of the glutamine-dependent carbamoyl phosphate synthetase (CPSase). CPSase catalyzes the formation of carbamoyl phosphate from the ammonia moiety of glutamine, carbonate, and phosphate donated by ATP, constituting the first step of 2 biosynthetic pathways, one leading to arginine and/or urea and the other to pyrimidine nucleotides. The large subunit (synthetase) binds the substrates ammonia (free or transferred from glutamine from the small subunit), hydrogencarbonate and ATP and carries out an ATP-coupled ligase reaction, activating hydrogencarbonate by forming carboxy phosphate which reacts with ammonia to form carbamoyl phosphate. The sequence is that of Carbamoyl phosphate synthase large chain from Thermoanaerobacter sp. (strain X514).